We begin with the raw amino-acid sequence, 145 residues long: Probable inactive ribonuclease-like protein 12 (145 aa).

An N-terminal signal peptide occupies residues 1–19 (MILMVIVFLLLLFWENELT). The N-linked (GlcNAc...) asparagine glycan is linked to asparagine 88.

It belongs to the pancreatic ribonuclease family.

Its subcellular location is the secreted. Functionally, does not exhibit any ribonuclease activity. This chain is Probable inactive ribonuclease-like protein 12 (Rnase12), found in Rattus norvegicus (Rat).